We begin with the raw amino-acid sequence, 411 residues long: ACT domain-containing protein ACR9 (411 aa).

3 consecutive ACT domains span residues 22-105 (VVTV…NVSK), 111-194 (LLKF…LAGP), and 243-322 (LLQI…VIIV).

In terms of biological role, may bind amino acids. In Arabidopsis thaliana (Mouse-ear cress), this protein is ACT domain-containing protein ACR9.